The primary structure comprises 187 residues: Ribosome-recycling factor (187 aa).

The protein belongs to the RRF family.

It localises to the cytoplasm. Its function is as follows. Responsible for the release of ribosomes from messenger RNA at the termination of protein biosynthesis. May increase the efficiency of translation by recycling ribosomes from one round of translation to another. This is Ribosome-recycling factor from Xanthobacter autotrophicus (strain ATCC BAA-1158 / Py2).